We begin with the raw amino-acid sequence, 270 residues long: MSDQQQPPVYKIALGIEYDGSRYYGWQRQNEVRSVQEKLEKALSQVANEPITVFCAGRTDAGVHGTGQVVHFETTAQRKDAAWTLGVNANLPGDIAVRWVKAVPDDFHARFSATARRYRYIIYNHRLRPAVLSKGVTHFYEPLDAERMHRAAQCLLGENDFTSFRAVQCQSRTPWRNVMHINVTRHGPYVVVDIKANAFVHHMVRNIVGSLMEVGAHNQPESWIAELLAAKDRTLAAATAKAEGLYLVAVDYPDRYDLPKPPMGPLFLAD.

The active-site Nucleophile is the Asp60. The segment at Phe107 to Phe111 is RNA binding. Tyr118 contributes to the substrate binding site. Residues Gln168 to Arg172 form an interaction with tRNA region.

The protein belongs to the tRNA pseudouridine synthase TruA family. Homodimer.

It catalyses the reaction uridine(38/39/40) in tRNA = pseudouridine(38/39/40) in tRNA. Formation of pseudouridine at positions 38, 39 and 40 in the anticodon stem and loop of transfer RNAs. The protein is tRNA pseudouridine synthase A of Escherichia coli O139:H28 (strain E24377A / ETEC).